The sequence spans 146 residues: Cytochrome c-556 (146 aa).

The first 24 residues, 1-24, serve as a signal peptide directing secretion; sequence MCMKLKTITAAMLFGCLCAGAVYA. Residues methionine 35, cysteine 135, cysteine 138, and histidine 139 each contribute to the heme c site.

Monomer. Post-translationally, binds 1 heme c group covalently per subunit.

In terms of biological role, low-spin monoheme cytochrome c. This chain is Cytochrome c-556, found in Agrobacterium fabrum (strain C58 / ATCC 33970) (Agrobacterium tumefaciens (strain C58)).